The primary structure comprises 589 residues: Sulfite reductase [NADPH] hemoprotein beta-component (589 aa).

4 residues coordinate [4Fe-4S] cluster: Cys443, Cys449, Cys488, and Cys492. Residue Cys492 participates in siroheme binding.

This sequence belongs to the nitrite and sulfite reductase 4Fe-4S domain family. In terms of assembly, alpha(8)-beta(8). The alpha component is a flavoprotein, the beta component is a hemoprotein. Siroheme serves as cofactor. [4Fe-4S] cluster is required as a cofactor.

It carries out the reaction hydrogen sulfide + 3 NADP(+) + 3 H2O = sulfite + 3 NADPH + 4 H(+). Its pathway is sulfur metabolism; hydrogen sulfide biosynthesis; hydrogen sulfide from sulfite (NADPH route): step 1/1. In terms of biological role, component of the sulfite reductase complex that catalyzes the 6-electron reduction of sulfite to sulfide. This is one of several activities required for the biosynthesis of L-cysteine from sulfate. The sequence is that of Sulfite reductase [NADPH] hemoprotein beta-component from Neisseria meningitidis serogroup C / serotype 2a (strain ATCC 700532 / DSM 15464 / FAM18).